The following is a 657-amino-acid chain: ER degradation-enhancing alpha-mannosidase-like protein 1 (657 aa).

The Cytoplasmic segment spans residues 1-4; sequence MQWR. A helical; Signal-anchor for type II membrane protein transmembrane segment spans residues 5-25; the sequence is ALVLGLVLLRLGLHGVLWLVF. Residues 26–657 are Lumenal-facing; that stretch reads GLGPSMGFYQ…RQIDQMVGLI (632 aa). A disordered region spans residues 48–94; that stretch reads SPDGPASPTSGPVGRPGGVSGPSWLQPPGTGAAQSPRKAPRRPGPGM. N-linked (GlcNAc...) asparagine glycans are attached at residues asparagine 181, asparagine 198, asparagine 299, asparagine 342, and asparagine 624.

It belongs to the glycosyl hydrolase 47 family. Interacts with DNAJC10. Interacts with DERL2 and DERL3. Binds to SEL1L.

It localises to the endoplasmic reticulum membrane. In terms of biological role, extracts misfolded glycoproteins, but not glycoproteins undergoing productive folding, from the calnexin cycle. It is directly involved in endoplasmic reticulum-associated degradation (ERAD) and targets misfolded glycoproteins for degradation in an N-glycan-independent manner, probably by forming a complex with SEL1L. It has low mannosidase activity, catalyzing mannose trimming from Man8GlcNAc2 to Man7GlcNAc2. The protein is ER degradation-enhancing alpha-mannosidase-like protein 1 (EDEM1) of Homo sapiens (Human).